The chain runs to 498 residues: ATP synthase subunit beta, chloroplastic (498 aa).

172–179 (GGAGVGKT) is an ATP binding site.

Belongs to the ATPase alpha/beta chains family. F-type ATPases have 2 components, CF(1) - the catalytic core - and CF(0) - the membrane proton channel. CF(1) has five subunits: alpha(3), beta(3), gamma(1), delta(1), epsilon(1). CF(0) has four main subunits: a(1), b(1), b'(1) and c(9-12).

It is found in the plastid. The protein resides in the chloroplast thylakoid membrane. The catalysed reaction is ATP + H2O + 4 H(+)(in) = ADP + phosphate + 5 H(+)(out). Functionally, produces ATP from ADP in the presence of a proton gradient across the membrane. The catalytic sites are hosted primarily by the beta subunits. This Nicotiana bigelovii (Bigelov's tobacco) protein is ATP synthase subunit beta, chloroplastic.